The following is a 102-amino-acid chain: ATP-dependent Clp protease adapter protein ClpS (102 aa).

Belongs to the ClpS family. In terms of assembly, binds to the N-terminal domain of the chaperone ClpA.

Functionally, involved in the modulation of the specificity of the ClpAP-mediated ATP-dependent protein degradation. This Wolinella succinogenes (strain ATCC 29543 / DSM 1740 / CCUG 13145 / JCM 31913 / LMG 7466 / NCTC 11488 / FDC 602W) (Vibrio succinogenes) protein is ATP-dependent Clp protease adapter protein ClpS.